We begin with the raw amino-acid sequence, 255 residues long: Adenosylcobinamide-GDP ribazoletransferase (255 aa).

The next 6 helical transmembrane spans lie at 43–63 (LVGTLLGLLCVLVYAFASLFF), 64–84 (PYQVAIVLMMAFSLLLTGAFH), 113–133 (IGTYGSATLTMALIGKFVFLT), 141–161 (FGLMIVVAYTLSRAVAATLIY), 195–215 (LAAISLGLGVGLLLILFAILF), and 234–254 (CLGGAQQLMELGIYLVLIAVV).

The protein belongs to the CobS family. It depends on Mg(2+) as a cofactor.

It is found in the cell inner membrane. The catalysed reaction is alpha-ribazole + adenosylcob(III)inamide-GDP = adenosylcob(III)alamin + GMP + H(+). The enzyme catalyses alpha-ribazole 5'-phosphate + adenosylcob(III)inamide-GDP = adenosylcob(III)alamin 5'-phosphate + GMP + H(+). Its pathway is cofactor biosynthesis; adenosylcobalamin biosynthesis; adenosylcobalamin from cob(II)yrinate a,c-diamide: step 7/7. Joins adenosylcobinamide-GDP and alpha-ribazole to generate adenosylcobalamin (Ado-cobalamin). Also synthesizes adenosylcobalamin 5'-phosphate from adenosylcobinamide-GDP and alpha-ribazole 5'-phosphate. The polypeptide is Adenosylcobinamide-GDP ribazoletransferase (Vibrio vulnificus (strain CMCP6)).